The primary structure comprises 231 residues: tRNA1(Val) (adenine(37)-N6)-methyltransferase (231 aa).

This sequence belongs to the methyltransferase superfamily. tRNA (adenine-N(6)-)-methyltransferase family.

The protein localises to the cytoplasm. The enzyme catalyses adenosine(37) in tRNA1(Val) + S-adenosyl-L-methionine = N(6)-methyladenosine(37) in tRNA1(Val) + S-adenosyl-L-homocysteine + H(+). In terms of biological role, specifically methylates the adenine in position 37 of tRNA(1)(Val) (anticodon cmo5UAC). The chain is tRNA1(Val) (adenine(37)-N6)-methyltransferase from Flavobacteriaceae bacterium (strain 3519-10).